The sequence spans 186 residues: MTLLVGLGNPTLRYAHTRHNAGFDILDSLVSELNLSFAFSPKHNAYLCVYKDFILLKPQTYMNLSGESVLSAKNFYKTKELLIVHDDLDLPLGVVRFKKGGGNGGHNGLKSIDLLCSNSYYRLRVGISKGIGVIEHVLSKFHKNEEPLKNAVFEHAKNALKFFIESHDFNAMQNRFTLKKPLQIES.

Tyr14 provides a ligand contact to tRNA. The active-site Proton acceptor is the His19. Residues Tyr61, Asn63, and Asn107 each contribute to the tRNA site.

The protein belongs to the PTH family. Monomer.

It localises to the cytoplasm. It carries out the reaction an N-acyl-L-alpha-aminoacyl-tRNA + H2O = an N-acyl-L-amino acid + a tRNA + H(+). Hydrolyzes ribosome-free peptidyl-tRNAs (with 1 or more amino acids incorporated), which drop off the ribosome during protein synthesis, or as a result of ribosome stalling. In terms of biological role, catalyzes the release of premature peptidyl moieties from peptidyl-tRNA molecules trapped in stalled 50S ribosomal subunits, and thus maintains levels of free tRNAs and 50S ribosomes. The chain is Peptidyl-tRNA hydrolase from Helicobacter pylori (strain G27).